Here is a 224-residue protein sequence, read N- to C-terminus: Oxalate oxidase GF-2.8 (224 aa).

A signal peptide spans 1-23 (MGYSKTLVAGLFAMLLLAPAVLA). A disulfide bridge links Cys33 with Cys49. In terms of domain architecture, Cupin type-1 spans 63–214 (SKLAKAGNTS…ALRVEARVVE (152 aa)). 2 N-linked (GlcNAc...) asparagine glycosylation sites follow: Asn70 and Asn75. Positions 111, 113, 118, and 160 each coordinate Mn(2+).

It belongs to the germin family. Oligomer (believed to be a pentamer but probably hexamer).

The protein resides in the secreted. Its subcellular location is the extracellular space. It localises to the apoplast. The protein localises to the cytoplasm. It is found in the cell wall. It carries out the reaction oxalate + O2 + 2 H(+) = H2O2 + 2 CO2. In terms of biological role, produces developmental and stress-related release of hydrogen peroxide in the apoplast. May play an important role in several aspects of plant growth and defense mechanisms. This chain is Oxalate oxidase GF-2.8, found in Triticum aestivum (Wheat).